Consider the following 154-residue polypeptide: Prefoldin subunit 5 (154 aa).

Position 2 is an N-acetylalanine (alanine 2). At lysine 42 the chain carries N6-acetyllysine. Serine 56 carries the post-translational modification Phosphoserine.

The protein belongs to the prefoldin subunit alpha family. Heterohexamer of two PFD-alpha type and four PFD-beta type subunits.

Its subcellular location is the nucleus. Its function is as follows. Binds specifically to cytosolic chaperonin (c-CPN) and transfers target proteins to it. Binds to nascent polypeptide chain and promotes folding in an environment in which there are many competing pathways for nonnative proteins. Represses the transcriptional activity of MYC. This Mus musculus (Mouse) protein is Prefoldin subunit 5 (Pfdn5).